Here is a 92-residue protein sequence, read N- to C-terminus: Large ribosomal subunit protein bL34m (92 aa).

The N-terminal 46 residues, 1–46 (MAFLARCFGCQACRSVALLSGRYLQSRVWMGLPDSWPLLSLQQARG), are a transit peptide targeting the mitochondrion. The residue at position 71 (serine 71) is a Phosphoserine.

The protein belongs to the bacterial ribosomal protein bL34 family. In terms of assembly, component of the mitochondrial ribosome large subunit (39S) which comprises a 16S rRNA and about 50 distinct proteins.

Its subcellular location is the mitochondrion. In Mus musculus (Mouse), this protein is Large ribosomal subunit protein bL34m (Mrpl34).